The following is a 107-amino-acid chain: Thioredoxin (107 aa).

The Thioredoxin domain maps to 2-107 (PSPIQVTDFS…TLTNALKKYL (106 aa)). Residues C32 and C35 each act as nucleophile in the active site. C32 and C35 form a disulfide bridge.

The protein belongs to the thioredoxin family.

It localises to the plastid. The protein resides in the chloroplast. Participates in various redox reactions through the reversible oxidation of its active center dithiol to a disulfide and catalyzes dithiol-disulfide exchange reactions. This chain is Thioredoxin (trxA), found in Cyanidium caldarium (Red alga).